The following is a 153-amino-acid chain: Transcriptional repressor NrdR (153 aa).

A zinc finger lies at 3–34; it reads CPFCNNINTQVKDSRAIEDDILIRRRRICLVC. Positions 49-139 constitute an ATP-cone domain; that stretch reads FMVIKKNGET…VYMNFKNIND (91 aa).

The protein belongs to the NrdR family. Requires Zn(2+) as cofactor.

In terms of biological role, negatively regulates transcription of bacterial ribonucleotide reductase nrd genes and operons by binding to NrdR-boxes. The sequence is that of Transcriptional repressor NrdR from Ehrlichia canis (strain Jake).